The sequence spans 61 residues: Small ribosomal subunit protein uS14 (61 aa).

Residues cysteine 24, cysteine 27, cysteine 40, and cysteine 43 each contribute to the Zn(2+) site.

The protein belongs to the universal ribosomal protein uS14 family. Zinc-binding uS14 subfamily. In terms of assembly, part of the 30S ribosomal subunit. Contacts proteins S3 and S10. The cofactor is Zn(2+).

Its function is as follows. Binds 16S rRNA, required for the assembly of 30S particles and may also be responsible for determining the conformation of the 16S rRNA at the A site. This chain is Small ribosomal subunit protein uS14, found in Roseiflexus castenholzii (strain DSM 13941 / HLO8).